The chain runs to 440 residues: Thymidine phosphorylase (440 aa).

The protein belongs to the thymidine/pyrimidine-nucleoside phosphorylase family. Homodimer.

The enzyme catalyses thymidine + phosphate = 2-deoxy-alpha-D-ribose 1-phosphate + thymine. The protein operates within pyrimidine metabolism; dTMP biosynthesis via salvage pathway; dTMP from thymine: step 1/2. In terms of biological role, the enzymes which catalyze the reversible phosphorolysis of pyrimidine nucleosides are involved in the degradation of these compounds and in their utilization as carbon and energy sources, or in the rescue of pyrimidine bases for nucleotide synthesis. The sequence is that of Thymidine phosphorylase from Salmonella heidelberg (strain SL476).